The primary structure comprises 367 residues: Chorismate synthase (367 aa).

Arg48 is a binding site for NADP(+). FMN is bound by residues 125–127, Gly284, 299–303, and Arg325; these read RSS and KPTPS.

The protein belongs to the chorismate synthase family. Homotetramer. The cofactor is FMNH2.

It catalyses the reaction 5-O-(1-carboxyvinyl)-3-phosphoshikimate = chorismate + phosphate. It functions in the pathway metabolic intermediate biosynthesis; chorismate biosynthesis; chorismate from D-erythrose 4-phosphate and phosphoenolpyruvate: step 7/7. Catalyzes the anti-1,4-elimination of the C-3 phosphate and the C-6 proR hydrogen from 5-enolpyruvylshikimate-3-phosphate (EPSP) to yield chorismate, which is the branch point compound that serves as the starting substrate for the three terminal pathways of aromatic amino acid biosynthesis. This reaction introduces a second double bond into the aromatic ring system. In Lachnoclostridium phytofermentans (strain ATCC 700394 / DSM 18823 / ISDg) (Clostridium phytofermentans), this protein is Chorismate synthase.